Here is a 206-residue protein sequence, read N- to C-terminus: Large ribosomal subunit protein eL13x (206 aa).

The interval 186–206 (NARHAGARAKRAAEAEKEEKK) is disordered. Over residues 196-206 (RAAEAEKEEKK) the composition is skewed to basic and acidic residues.

It belongs to the eukaryotic ribosomal protein eL13 family.

This Arabidopsis thaliana (Mouse-ear cress) protein is Large ribosomal subunit protein eL13x (RPL13D).